Reading from the N-terminus, the 276-residue chain is Diaminopimelate epimerase (276 aa).

The substrate site is built by N13, Q46, and N66. The active-site Proton donor is C75. Residues 76-77 (GN), N159, N192, and 210-211 (ER) each bind substrate. C219 acts as the Proton acceptor in catalysis. 220 to 221 (GT) is a binding site for substrate.

This sequence belongs to the diaminopimelate epimerase family. As to quaternary structure, homodimer.

The protein localises to the cytoplasm. It carries out the reaction (2S,6S)-2,6-diaminopimelate = meso-2,6-diaminopimelate. It participates in amino-acid biosynthesis; L-lysine biosynthesis via DAP pathway; DL-2,6-diaminopimelate from LL-2,6-diaminopimelate: step 1/1. Catalyzes the stereoinversion of LL-2,6-diaminopimelate (L,L-DAP) to meso-diaminopimelate (meso-DAP), a precursor of L-lysine and an essential component of the bacterial peptidoglycan. The sequence is that of Diaminopimelate epimerase from Pseudomonas entomophila (strain L48).